We begin with the raw amino-acid sequence, 140 residues long: Ribonuclease P protein component (140 aa).

The protein belongs to the RnpA family. As to quaternary structure, consists of a catalytic RNA component (M1 or rnpB) and a protein subunit.

The enzyme catalyses Endonucleolytic cleavage of RNA, removing 5'-extranucleotides from tRNA precursor.. RNaseP catalyzes the removal of the 5'-leader sequence from pre-tRNA to produce the mature 5'-terminus. It can also cleave other RNA substrates such as 4.5S RNA. The protein component plays an auxiliary but essential role in vivo by binding to the 5'-leader sequence and broadening the substrate specificity of the ribozyme. This chain is Ribonuclease P protein component, found in Nostoc punctiforme (strain ATCC 29133 / PCC 73102).